Consider the following 267-residue polypeptide: Hydroxynaphthalene reductase-like protein Arp2 (267 aa).

Residues Ile25, Asn45, Asp71, and Asn98 each coordinate NADP(+). Catalysis depends on proton donor residues Ser147 and Ser148. NADP(+)-binding residues include Tyr162, Lys166, Val195, and Thr197. Tyr162 (proton acceptor) is an active-site residue. Lys166 functions as the Lowers pKa of active site Tyr in the catalytic mechanism.

This sequence belongs to the short-chain dehydrogenases/reductases (SDR) family.

In terms of biological role, hydroxynaphthalene reductase-like protein; part of the Pks2 gene cluster that mediates the formation of infectious structures (appressoria), enabling these fungi to kill insects faster. The product of the Pks2 gene cluster is different from the one of Pks1 and has still not been identified. The sequence is that of Hydroxynaphthalene reductase-like protein Arp2 from Metarhizium brunneum (strain ARSEF 3297).